The sequence spans 977 residues: Bifunctional glutamine synthetase adenylyltransferase/adenylyl-removing enzyme (977 aa).

The segment at 1 to 457 (MRLPLPSDLP…HFRQVIADPD (457 aa)) is adenylyl removase. An adenylyl transferase region spans residues 468 to 977 (GGEWSPLWEQ…RRIWGELGLS (510 aa)).

Belongs to the GlnE family. Requires Mg(2+) as cofactor.

It catalyses the reaction [glutamine synthetase]-O(4)-(5'-adenylyl)-L-tyrosine + phosphate = [glutamine synthetase]-L-tyrosine + ADP. The enzyme catalyses [glutamine synthetase]-L-tyrosine + ATP = [glutamine synthetase]-O(4)-(5'-adenylyl)-L-tyrosine + diphosphate. Its function is as follows. Involved in the regulation of glutamine synthetase GlnA, a key enzyme in the process to assimilate ammonia. When cellular nitrogen levels are high, the C-terminal adenylyl transferase (AT) inactivates GlnA by covalent transfer of an adenylyl group from ATP to specific tyrosine residue of GlnA, thus reducing its activity. Conversely, when nitrogen levels are low, the N-terminal adenylyl removase (AR) activates GlnA by removing the adenylyl group by phosphorolysis, increasing its activity. The regulatory region of GlnE binds the signal transduction protein PII (GlnB) which indicates the nitrogen status of the cell. The protein is Bifunctional glutamine synthetase adenylyltransferase/adenylyl-removing enzyme of Pseudomonas putida (strain ATCC 47054 / DSM 6125 / CFBP 8728 / NCIMB 11950 / KT2440).